The following is a 287-amino-acid chain: X-box-binding protein 1 (287 aa).

In terms of domain architecture, bZIP spans 61–117 (EEKMDRRKLKNRVAAQNARDKKKERSAKIEDVMRDLVEENRRLRAENERLRRQNKNL). The interval 63 to 87 (KMDRRKLKNRVAAQNARDKKKERSA) is disordered. The segment at 63–88 (KMDRRKLKNRVAAQNARDKKKERSAK) is basic motif. Basic and acidic residues predominate over residues 78–87 (ARDKKKERSA). The leucine-zipper stretch occupies residues 89–117 (IEDVMRDLVEENRRLRAENERLRRQNKNL).

As to quaternary structure, interacts with SUMO-conjugating enzyme ubc-9; the interaction is direct. Sumoylated. Sumoylation may negatively modulate the transcription of genes involved in the ER-stress-response.

It localises to the nucleus. In terms of biological role, required for transcriptional regulation of the unfolded protein response (UPR) in the endoplasmic reticulum (ER) under stressed conditions, acting downstream of ire-1, and also maintaining ER homeostasis via a negative feedback loop, in parallel with ER kinase pek-1. May also regulate Golgi protein trafficking distal to the ER. Protects the host organism from the detrimental effects of mounting an innate immune response to microbes, such as the Gram-negative bacterium P.aeruginosa, probably by modulating the UPR. Functionally, plays a role in the unconventional cytoplasmic splicing processing of its own mRNA triggered by the endoplasmic reticulum (ER) transmembrane endoribonuclease ire-1: upon ER stress, the emerging xbp-1 polypeptide chain, as part of a mRNA-ribosome-nascent chain (R-RNC) complex, cotranslationally recruits its own unprocessed mRNA through transient docking to the ER membrane and translational pausing, therefore facilitating efficient ire-1-mediated xbp-1 mRNA isoform 2 production. Its function is as follows. Functions as a stress-inducible potent transcriptional activator during endoplasmic reticulum (ER) stress by inducing unfolded protein response (UPR) target genes via binding to the UPR element (UPRE). Plays a role in modulation of the UPR, lipid metabolism, proteostasis, and lifespan. In neurons, rescues stress resistance, increases longevity, and, drives expression of lysosomal genes in the intestine and activates the UPR in distal, non-neuronal cell types through a cell-nonautonomous mechanism. In neurons or intestine, plays a role in protection against proteotoxicity, acting via positive modulation of genes involved in lysosomal function, including lipases and the fatty-acid desaturase fat-6. Protection against proteotoxicity in neurons is dependent upon the transcription factor atf-6. The chain is X-box-binding protein 1 from Caenorhabditis elegans.